The primary structure comprises 141 residues: MKLTITEIQEILPHRYPFLLLDSVEEVIPGERVVAKKNVTVNEQVFQGHFPGNPVLPGVLIIESLAQAGAVALLSMPEFKGKTAYFGGLDKAKFRQKVTPGDTLILEVELLKVRASAGMGKGVAKVNGKKVAEAELTFMIG.

H49 is a catalytic residue.

This sequence belongs to the thioester dehydratase family. FabZ subfamily.

It is found in the cytoplasm. The catalysed reaction is a (3R)-hydroxyacyl-[ACP] = a (2E)-enoyl-[ACP] + H2O. Involved in unsaturated fatty acids biosynthesis. Catalyzes the dehydration of short chain beta-hydroxyacyl-ACPs and long chain saturated and unsaturated beta-hydroxyacyl-ACPs. The sequence is that of 3-hydroxyacyl-[acyl-carrier-protein] dehydratase FabZ (fabZ2) from Enterococcus faecalis (strain ATCC 700802 / V583).